The sequence spans 463 residues: Methionine aminopeptidase 2-2 (463 aa).

Residues 1 to 107 (MGAKTFEGGD…VPLSQLFPDG (107 aa)) form a disordered region. Acidic residues predominate over residues 37-53 (EDGDGEFGTDDDDDGDG). Residues 69-83 (PKKRKRSKKKKSNKK) are compositionally biased toward basic residues. His-215 serves as a coordination point for substrate. Positions 236, 247, and 316 each coordinate a divalent metal cation. His-324 is a substrate binding site. Residues Glu-349 and Glu-444 each contribute to the a divalent metal cation site.

This sequence belongs to the peptidase M24A family. Methionine aminopeptidase eukaryotic type 2 subfamily. Requires Co(2+) as cofactor. The cofactor is Zn(2+). It depends on Mn(2+) as a cofactor. Fe(2+) serves as cofactor.

Its subcellular location is the cytoplasm. It carries out the reaction Release of N-terminal amino acids, preferentially methionine, from peptides and arylamides.. Cotranslationally removes the N-terminal methionine from nascent proteins. The N-terminal methionine is often cleaved when the second residue in the primary sequence is small and uncharged (Met-Ala-, Cys, Gly, Pro, Ser, Thr, or Val). The chain is Methionine aminopeptidase 2-2 from Talaromyces marneffei (strain ATCC 18224 / CBS 334.59 / QM 7333) (Penicillium marneffei).